Consider the following 445-residue polypeptide: Ribosomal protein uS12 methylthiotransferase RimO (445 aa).

Residues 13–123 (PRVGFVSLGC…VMAAIHHHLP (111 aa)) enclose the MTTase N-terminal domain. [4Fe-4S] cluster-binding residues include Cys22, Cys58, Cys87, Cys154, Cys158, and Cys161. The region spanning 140 to 377 (LTPKHYAYLK…MQQQEIISKQ (238 aa)) is the Radical SAM core domain. The TRAM domain occupies 380-445 (AVKKGQQLRV…DIHDLWTEKI (66 aa)).

Belongs to the methylthiotransferase family. RimO subfamily. Requires [4Fe-4S] cluster as cofactor.

It is found in the cytoplasm. It carries out the reaction L-aspartate(89)-[ribosomal protein uS12]-hydrogen + (sulfur carrier)-SH + AH2 + 2 S-adenosyl-L-methionine = 3-methylsulfanyl-L-aspartate(89)-[ribosomal protein uS12]-hydrogen + (sulfur carrier)-H + 5'-deoxyadenosine + L-methionine + A + S-adenosyl-L-homocysteine + 2 H(+). Catalyzes the methylthiolation of an aspartic acid residue of ribosomal protein uS12. The polypeptide is Ribosomal protein uS12 methylthiotransferase RimO (Nitrosomonas eutropha (strain DSM 101675 / C91 / Nm57)).